The chain runs to 207 residues: Ribosomal RNA small subunit methyltransferase G (207 aa).

S-adenosyl-L-methionine-binding positions include glycine 76, glutamine 81, 127-128 (VE), and arginine 141.

Belongs to the methyltransferase superfamily. RNA methyltransferase RsmG family.

It localises to the cytoplasm. It carries out the reaction guanosine(527) in 16S rRNA + S-adenosyl-L-methionine = N(7)-methylguanosine(527) in 16S rRNA + S-adenosyl-L-homocysteine. Functionally, specifically methylates the N7 position of guanine in position 527 of 16S rRNA. The sequence is that of Ribosomal RNA small subunit methyltransferase G from Neisseria meningitidis serogroup C / serotype 2a (strain ATCC 700532 / DSM 15464 / FAM18).